The sequence spans 160 residues: Ribosomal RNA large subunit methyltransferase H (160 aa).

Residues Leu77, Gly109, and 128 to 133 each bind S-adenosyl-L-methionine; that span reads FSRMTF.

The protein belongs to the RNA methyltransferase RlmH family. As to quaternary structure, homodimer.

It is found in the cytoplasm. It catalyses the reaction pseudouridine(1915) in 23S rRNA + S-adenosyl-L-methionine = N(3)-methylpseudouridine(1915) in 23S rRNA + S-adenosyl-L-homocysteine + H(+). Functionally, specifically methylates the pseudouridine at position 1915 (m3Psi1915) in 23S rRNA. This is Ribosomal RNA large subunit methyltransferase H from Pelotomaculum thermopropionicum (strain DSM 13744 / JCM 10971 / SI).